A 285-amino-acid chain; its full sequence is Transcription factor MYB15 (285 aa).

2 consecutive HTH myb-type domains span residues 9 to 61 (KMGL…MNYL) and 62 to 116 (KPDI…KKRL). 2 DNA-binding regions (H-T-H motif) span residues 37–61 (WRAL…MNYL) and 89–112 (WSAI…HTHL). A disordered region spans residues 115-172 (RLEDYQPAKPKTSNKKKGTKPKSESVITSSNSTRSESELADSSNPSGESLFSTSPSTS). Residues 139–158 (SVITSSNSTRSESELADSSN) show a composition bias toward polar residues. Low complexity predominate over residues 159 to 172 (PSGESLFSTSPSTS).

In terms of assembly, interacts with SCRM/ICE1. As to expression, expressed in roots, leaves, stems and flowers. Expressed in stomatal guard cells.

It is found in the nucleus. Transcription factor involved in cold-regulation of CBF genes and in the development of freezing tolerance. May be part of a complex network of transcription factors controlling the expression of CBF genes and other genes in response to cold stress. Binds to the MYB recognition sequences in the promoters of CBF1, CBF2 and CBF3 genes. Involved in drought and salt tolerance. May enhance expression levels of genes involved in abscisic acid (ABA) biosynthesis and signaling, as well as those encoding stress-protective proteins. This is Transcription factor MYB15 from Arabidopsis thaliana (Mouse-ear cress).